A 338-amino-acid chain; its full sequence is D-erythrose-4-phosphate dehydrogenase (338 aa).

11 to 12 serves as a coordination point for NAD(+); the sequence is RI. Substrate-binding positions include 153–155, Arg-199, 212–213, and Arg-235; these read SCT and TK. Cys-154 (nucleophile) is an active-site residue. Residue Asn-317 participates in NAD(+) binding.

It belongs to the glyceraldehyde-3-phosphate dehydrogenase family. Epd subfamily. As to quaternary structure, homotetramer.

It localises to the cytoplasm. The enzyme catalyses D-erythrose 4-phosphate + NAD(+) + H2O = 4-phospho-D-erythronate + NADH + 2 H(+). Its pathway is cofactor biosynthesis; pyridoxine 5'-phosphate biosynthesis; pyridoxine 5'-phosphate from D-erythrose 4-phosphate: step 1/5. Its function is as follows. Catalyzes the NAD-dependent conversion of D-erythrose 4-phosphate to 4-phosphoerythronate. The chain is D-erythrose-4-phosphate dehydrogenase from Shewanella putrefaciens (strain CN-32 / ATCC BAA-453).